The sequence spans 1427 residues: Protein expanded (1427 aa).

The FERM domain maps to 26–399; that stretch reads RFLALRLLGQ…DTHQWSMKLA (374 aa). Residues 176–212 are disordered; sequence GDAPPGTSNSKDDSGEETSASPSNGGRGLSATTTLPK. Over residues 192-211 the composition is skewed to polar residues; sequence ETSASPSNGGRGLSATTTLP. Phosphotyrosine occurs at positions 227 and 423. Disordered stretches follow at residues 520–566 and 611–656; these read VRPQ…IGSQ and NSAL…SGVY. The span at 524–544 shows a compositional bias: polar residues; the sequence is DASSNGATIVTNSSVQRNSMG. Over residues 545–559 the composition is skewed to low complexity; the sequence is TTANDSSTATDSPSS. A Phosphotyrosine modification is found at Y679. The segment covering 688 to 710 has biased composition (basic and acidic residues); the sequence is EETHVQHSDSVDGKKKEDFRPRS. Disordered regions lie at residues 688–732, 766–792, 815–880, 939–963, and 1000–1022; these read EETH…DNKH, YVTL…YSAR, APKP…SLKS, HNSN…HRHS, and LAPP…HPHL. Y766 is subject to Phosphotyrosine. Residues 818 to 838 show a composition bias toward pro residues; the sequence is PDSPPCSPPVPPAPIPAPPPA. An RXPPXY motif motif is present at residues 842 to 847; that stretch reads RDPPPY. Over residues 848–859 the composition is skewed to polar residues; sequence SISSKPRPTSLI. Residues 860-877 show a composition bias toward low complexity; sequence SVSSSAHPAPSAAGSMSS. Over residues 951–963 the composition is skewed to basic residues; the sequence is LHHHHVPSHHRHS. The segment covering 1001-1019 has biased composition (pro residues); it reads APPPPSLPRQPPPPPPPNH. The SH3-binding motif lies at 1008 to 1020; that stretch reads PRQPPPPPPPNHP. The residue at position 1103 (Y1103) is a Phosphotyrosine. Positions 1149-1157 match the SH3-binding motif; sequence PPPPPPLHP. S1181 is subject to Phosphoserine. Disordered regions lie at residues 1190 to 1267 and 1345 to 1398; these read DLLP…WAGE and TGQE…LPVQ. Pro residues-rich tracts occupy residues 1214–1230 and 1237–1246; these read PPMP…PSKP and PIPPRKPPTL. 2 stretches are compositionally biased toward polar residues: residues 1253–1262 and 1345–1370; these read SPLTKTSSGA and TGQE…SSAG. Positions 1376-1388 are enriched in basic residues; the sequence is KARKGSTVSHRHP.

As to quaternary structure, forms a complex with Kibra and Mer. Interacts (via RXPPXY motif) with Kibra (via domain WW 1). Interacts with Mer and Hpo (via SARAH domain). Interacts with Schip1; the interaction results in recruitment of Schip1 to the apical cell membrane. Interacts with ack and yki. Phosphorylated by Ack at several tyrosines including Tyr-227, Tyr-423, Tyr-679, Tyr-766 and Tyr-1103.

It is found in the apical cell membrane. Activates the Hippo/SWH (Sav/Wts/Hpo) signaling pathway, a signaling pathway that plays a pivotal role in organ size control and tumor suppression by restricting proliferation and promoting apoptosis. The core of this pathway is composed of a kinase cascade wherein Hippo (Hpo), in complex with its regulatory protein Salvador (Sav), phosphorylates and activates Warts (Wts) in complex with its regulatory protein Mats, which in turn phosphorylates and inactivates the Yorkie (Yki) oncoprotein. Ex acts synergistically along with Mer and Kibra to regulate the Hippo signaling pathway. Involved in the control of cell proliferation in imaginal disks. May bind to certain proteins of signal transduction pathways by interaction with their SH3 domains. Required for apical localization of Schip1. The protein is Protein expanded (ex) of Drosophila melanogaster (Fruit fly).